The primary structure comprises 373 residues: Aromatic amino acid aminotransferase (373 aa).

N6-(pyridoxal phosphate)lysine is present on lysine 212.

It belongs to the class-II pyridoxal-phosphate-dependent aminotransferase family. In terms of assembly, homodimer. Requires pyridoxal 5'-phosphate as cofactor.

It catalyses the reaction an aromatic L-alpha-amino acid + 2-oxoglutarate = an aromatic oxo-acid + L-glutamate. In terms of biological role, aminotransferase that catalyzes the conversion of aromatic amino acids and 2-oxoglutarate into corresponding aromatic oxo acids and L-glutamate. In Corynebacterium jeikeium (strain K411), this protein is Aromatic amino acid aminotransferase.